Reading from the N-terminus, the 312-residue chain is tRNA dimethylallyltransferase (312 aa).

13–20 (GPTAAGKT) contributes to the ATP binding site. A substrate-binding site is contributed by 15 to 20 (TAAGKT). Interaction with substrate tRNA regions lie at residues 38–41 (DSAM), 162–166 (QRLLR), and 244–249 (RCVGYR).

This sequence belongs to the IPP transferase family. Monomer. Mg(2+) is required as a cofactor.

It catalyses the reaction adenosine(37) in tRNA + dimethylallyl diphosphate = N(6)-dimethylallyladenosine(37) in tRNA + diphosphate. In terms of biological role, catalyzes the transfer of a dimethylallyl group onto the adenine at position 37 in tRNAs that read codons beginning with uridine, leading to the formation of N6-(dimethylallyl)adenosine (i(6)A). In Chromohalobacter salexigens (strain ATCC BAA-138 / DSM 3043 / CIP 106854 / NCIMB 13768 / 1H11), this protein is tRNA dimethylallyltransferase.